The following is a 100-amino-acid chain: Large ribosomal subunit protein uL23 (100 aa).

Belongs to the universal ribosomal protein uL23 family. As to quaternary structure, part of the 50S ribosomal subunit. Contacts protein L29, and trigger factor when it is bound to the ribosome.

One of the early assembly proteins it binds 23S rRNA. One of the proteins that surrounds the polypeptide exit tunnel on the outside of the ribosome. Forms the main docking site for trigger factor binding to the ribosome. The chain is Large ribosomal subunit protein uL23 from Photorhabdus laumondii subsp. laumondii (strain DSM 15139 / CIP 105565 / TT01) (Photorhabdus luminescens subsp. laumondii).